Reading from the N-terminus, the 170-residue chain is NADH-quinone oxidoreductase subunit B (170 aa).

Residues Cys46, Cys47, Cys111, and Cys141 each coordinate [4Fe-4S] cluster.

This sequence belongs to the complex I 20 kDa subunit family. In terms of assembly, NDH-1 is composed of 14 different subunits. Subunits NuoB, C, D, E, F, and G constitute the peripheral sector of the complex. It depends on [4Fe-4S] cluster as a cofactor.

It is found in the cell membrane. The catalysed reaction is a quinone + NADH + 5 H(+)(in) = a quinol + NAD(+) + 4 H(+)(out). In terms of biological role, NDH-1 shuttles electrons from NADH, via FMN and iron-sulfur (Fe-S) centers, to quinones in the respiratory chain. The immediate electron acceptor for the enzyme in this species is believed to be a menaquinone. Couples the redox reaction to proton translocation (for every two electrons transferred, four hydrogen ions are translocated across the cytoplasmic membrane), and thus conserves the redox energy in a proton gradient. The polypeptide is NADH-quinone oxidoreductase subunit B (Geobacillus sp. (strain WCH70)).